Reading from the N-terminus, the 156-residue chain is Ribonuclease H (156 aa).

The 142-residue stretch at 3 to 144 (ELKQIRIYTD…CDTLAREAAE (142 aa)) folds into the RNase H type-1 domain. Positions 12, 50, 72, and 136 each coordinate Mg(2+).

Belongs to the RNase H family. In terms of assembly, monomer. Mg(2+) is required as a cofactor.

It localises to the cytoplasm. It carries out the reaction Endonucleolytic cleavage to 5'-phosphomonoester.. Its function is as follows. Endonuclease that specifically degrades the RNA of RNA-DNA hybrids. The chain is Ribonuclease H from Shewanella amazonensis (strain ATCC BAA-1098 / SB2B).